The sequence spans 182 residues: Plasmolipin (182 aa).

Residues 1–20 form a disordered region; that stretch reads MAEFPSKVNTRTSSPAQGGG. At 1–35 the chain is on the cytoplasmic side; sequence MAEFPSKVNTRTSSPAQGGGAVVSTLSPDLGFVRS. The span at 7 to 16 shows a compositional bias: polar residues; that stretch reads KVNTRTSSPA. The MARVEL domain maps to 32–166; that stretch reads FVRSSLGALM…SAFLSFQAWR (135 aa). Residues 36–56 traverse the membrane as a helical segment; sequence SLGALMLLQLVLGLLVWALIA. Residues 57 to 68 lie on the Extracellular side of the membrane; the sequence is DTPYHLYPSYGW. Residues 69–89 traverse the membrane as a helical segment; sequence VMFVAVFLWLVTIIFFVLYLF. At 90 to 99 the chain is on the cytoplasmic side; it reads QLHMKLYMVP. The chain crosses the membrane as a helical span at residues 100 to 120; the sequence is WPLVLMVFNVGATVLYITAFI. Over 121–141 the chain is Extracellular; sequence TCSASVELTSLKGSQPYNQRA. The helical transmembrane segment at 142–162 threads the bilayer; sequence AASFFSCLVMIAYGVSAFLSF. The Cytoplasmic portion of the chain corresponds to 163–182; the sequence is QAWRGVGSNAATSQMAGGYA.

This sequence belongs to the MAL family. In terms of assembly, forms oligomers. Post-translationally, phosphorylated.

It is found in the cell membrane. It localises to the myelin membrane. The protein localises to the apical cell membrane. Functionally, main component of the myelin sheath that plays an important role in myelin membrane biogenesis and myelination. Plays an essential function in apical endocytosis. Regulates epithelial development through the regulation of apical endocytosis. Part of the intracellular machinery that mediates basolateral-to-apical transport of ICAM-1, an essential adhesion receptor in epithelial cells, from the subapical compartment in hepatic epithelial cells. The sequence is that of Plasmolipin (PLLP) from Bos taurus (Bovine).